Consider the following 244-residue polypeptide: 5-oxoprolinase subunit A (244 aa).

It belongs to the LamB/PxpA family. As to quaternary structure, forms a complex composed of PxpA, PxpB and PxpC.

It catalyses the reaction 5-oxo-L-proline + ATP + 2 H2O = L-glutamate + ADP + phosphate + H(+). Its function is as follows. Catalyzes the cleavage of 5-oxoproline to form L-glutamate coupled to the hydrolysis of ATP to ADP and inorganic phosphate. This is 5-oxoprolinase subunit A from Citrobacter koseri (strain ATCC BAA-895 / CDC 4225-83 / SGSC4696).